The primary structure comprises 146 residues: Flagellar assembly factor FliW (146 aa).

This sequence belongs to the FliW family. Interacts with translational regulator CsrA and flagellin(s).

It is found in the cytoplasm. Acts as an anti-CsrA protein, binds CsrA and prevents it from repressing translation of its target genes, one of which is flagellin. Binds to flagellin and participates in the assembly of the flagellum. This is Flagellar assembly factor FliW from Azoarcus sp. (strain BH72).